The chain runs to 426 residues: Putative two-component response regulator ARR20 (426 aa).

A Response regulatory domain is found at 40–155 (SNRVLLVGAD…VIAVLWRHVY (116 aa)). Asp-91 carries the post-translational modification 4-aspartylphosphate. The segment at 161–216 (KSGLDKPGESGTVESDPDEYDDLEQDNLYESNEEGSKNTCDHKEEKSPTKKPRMQW) is disordered. Residues 175–193 (SDPDEYDDLEQDNLYESNE) show a composition bias toward acidic residues. Residues 194–208 (EGSKNTCDHKEEKSP) show a composition bias toward basic and acidic residues. The Nuclear localization signal signature appears at 210-213 (KKPR). The segment at residues 213–268 (RMQWTPELHHKFEVAVEKMGSLEKAFPKTILKYMQEELNVQGLTRNNVASHLQKYR) is a DNA-binding region (myb-like GARP).

The protein belongs to the ARR family. Type-B subfamily. Binds the target DNA as a monomer. Two-component system major event consists of a His-to-Asp phosphorelay between a sensor histidine kinase (HK) and a response regulator (RR). In plants, the His-to-Asp phosphorelay involves an additional intermediate named Histidine-containing phosphotransfer protein (HPt). This multistep phosphorelay consists of a His-Asp-His-Asp sequential transfer of a phosphate group between first a His and an Asp of the HK protein, followed by the transfer to a conserved His of the HPt protein and finally the transfer to an Asp in the receiver domain of the RR protein. As to expression, predominantly expressed in mature pistil tip. Also detected in the shoot apical meristem as well as vascular tissue and hydathodes of the leaves.

It is found in the nucleus. Putative transcriptional activator that binds specifically to the DNA sequence 5'-[AG]GATT-3'. Functions as a response regulator involved in His-to-Asp phosphorelay signal transduction system. Phosphorylation of the Asp residue in the receiver domain activates the ability of the protein to promote the transcription of target genes. Could directly activate some type-A response regulators in response to cytokinins. The polypeptide is Putative two-component response regulator ARR20 (ARR20) (Arabidopsis thaliana (Mouse-ear cress)).